We begin with the raw amino-acid sequence, 150 residues long: Large ribosomal subunit protein bL9 (150 aa).

Belongs to the bacterial ribosomal protein bL9 family.

Binds to the 23S rRNA. The protein is Large ribosomal subunit protein bL9 of Vibrio campbellii (strain ATCC BAA-1116).